We begin with the raw amino-acid sequence, 328 residues long: P2Y purinoceptor 3 (328 aa).

At 1–22 (MSMANFTGGRNSCTFHEEFKQV) the chain is on the extracellular side. The N-linked (GlcNAc...) asparagine glycan is linked to asparagine 5. A helical membrane pass occupies residues 23–43 (LLPLVYSVVFLLGLPLNAVVI). The Cytoplasmic segment spans residues 44–57 (GQIWLARKALTRTT). The chain crosses the membrane as a helical span at residues 58 to 78 (IYMLNLAMADLLYVCSLPLLI). Over 79–96 (YNYTQKDYWPFGDFTCKF) the chain is Extracellular. The cysteines at positions 94 and 172 are disulfide-linked. The chain crosses the membrane as a helical span at residues 97 to 117 (VRFQFYTNLHGSILFLTCISV). Over 118 to 139 (QRYMGICHPLASWHKKKGKKLT) the chain is Cytoplasmic. A helical membrane pass occupies residues 140-160 (WLVCAAVWFIVIAQCLPTFVF). The Extracellular portion of the chain corresponds to 161–189 (ASTGTQRNRTVCYDLSPPDRSTSYFPYGI). The chain crosses the membrane as a helical span at residues 190 to 210 (TLTITGFLLPFAAILACYCSM). The Cytoplasmic segment spans residues 211–231 (ARILCQKDELIGLAVHKKKDK). Residues 232-252 (AVRMIIIVVIVFSISFFPFHL) form a helical membrane-spanning segment. Over 253-275 (TKTIYLIVRSSASLPCPTLQAFA) the chain is Extracellular. A helical membrane pass occupies residues 276–298 (IAYKCTRPFASMNSVLDPILFYF). Residues 299-323 (TQRKFRESTRYLLDKMSSKWRQDHC) lie on the Cytoplasmic side of the membrane.

This sequence belongs to the G-protein coupled receptor 1 family.

The protein localises to the cell membrane. Receptor for extracellular ADP &gt; UTP &gt; ATP = UDP. The activity of this receptor is mediated by G proteins which activate a phosphatidylinositol-calcium second messenger system. The polypeptide is P2Y purinoceptor 3 (P2RY3) (Gallus gallus (Chicken)).